We begin with the raw amino-acid sequence, 736 residues long: Probable beta-glucosidase L (736 aa).

Residues 1-21 (MNYRVPSLKATALAMAALTQA) form the signal peptide. Asn-224 is a glycosylation site (N-linked (GlcNAc...) asparagine). Asp-252 is an active-site residue. N-linked (GlcNAc...) asparagine glycosylation is found at Asn-295, Asn-363, Asn-429, and Asn-607.

Belongs to the glycosyl hydrolase 3 family.

The protein resides in the secreted. The catalysed reaction is Hydrolysis of terminal, non-reducing beta-D-glucosyl residues with release of beta-D-glucose.. Its pathway is glycan metabolism; cellulose degradation. Functionally, beta-glucosidases are one of a number of cellulolytic enzymes involved in the degradation of cellulosic biomass. Catalyzes the last step releasing glucose from the inhibitory cellobiose. This is Probable beta-glucosidase L (bglL) from Aspergillus terreus (strain NIH 2624 / FGSC A1156).